Here is a 447-residue protein sequence, read N- to C-terminus: Elongation factor 1-alpha (447 aa).

One can recognise a tr-type G domain in the interval 5 to 230 (KTHINIVVIG…DQINEPKRPS (226 aa)). Positions 14–21 (GHVDSGKS) are G1. Position 14-21 (14-21 (GHVDSGKS)) interacts with GTP. Lys55 carries the N6,N6-dimethyllysine modification. Positions 70–74 (GITID) are G2. N6,N6,N6-trimethyllysine is present on Lys79. The G3 stretch occupies residues 91 to 94 (DAPG). Residues 91–95 (DAPGH) and 153–156 (NKMD) contribute to the GTP site. Residues 153–156 (NKMD) form a G4 region. Position 187 is an N6,N6,N6-trimethyllysine (Lys187). The interval 194–196 (SGF) is G5. Lys261 bears the N6-methyllysine mark. The residue at position 289 (Glu289) is a 5-glutamyl glycerylphosphorylethanolamine. At Lys306 the chain carries N6,N6,N6-trimethyllysine. Glu362 is modified (5-glutamyl glycerylphosphorylethanolamine). At Lys396 the chain carries N6,N6,N6-trimethyllysine.

It belongs to the TRAFAC class translation factor GTPase superfamily. Classic translation factor GTPase family. EF-Tu/EF-1A subfamily.

It is found in the cytoplasm. This protein promotes the GTP-dependent binding of aminoacyl-tRNA to the A-site of ribosomes during protein biosynthesis. The polypeptide is Elongation factor 1-alpha (REFA1) (Oryza sativa subsp. japonica (Rice)).